A 209-amino-acid chain; its full sequence is MRNSAGLFMIMEPDRAVLLCARRAYHGGAVSDTFLEKISIPRGHRDCTDAKIYETAVREFVEETGRFFHSAYIYKFPFTLHWTDEGVTYKYSIYVGVVRGALADVKFKPNTYTVKLLPGANNDYRIVLRPRRFNCEISRSLTIVPLNQYFDYMTSKQLNTYASSNYGEFFDFVRQVKRLFDNKQLHDFFHASLQRVDPNDALACPGPQR.

Residues 1–167 (MRNSAGLFMI…LNTYASSNYG (167 aa)) enclose the Nudix hydrolase domain.

This is an uncharacterized protein from Orgyia pseudotsugata (Douglas-fir tussock moth).